The following is a 576-amino-acid chain: Proline--tRNA ligase (576 aa).

This sequence belongs to the class-II aminoacyl-tRNA synthetase family. ProS type 1 subfamily. In terms of assembly, homodimer.

It is found in the cytoplasm. The enzyme catalyses tRNA(Pro) + L-proline + ATP = L-prolyl-tRNA(Pro) + AMP + diphosphate. Catalyzes the attachment of proline to tRNA(Pro) in a two-step reaction: proline is first activated by ATP to form Pro-AMP and then transferred to the acceptor end of tRNA(Pro). As ProRS can inadvertently accommodate and process non-cognate amino acids such as alanine and cysteine, to avoid such errors it has two additional distinct editing activities against alanine. One activity is designated as 'pretransfer' editing and involves the tRNA(Pro)-independent hydrolysis of activated Ala-AMP. The other activity is designated 'posttransfer' editing and involves deacylation of mischarged Ala-tRNA(Pro). The misacylated Cys-tRNA(Pro) is not edited by ProRS. In Leptospira interrogans serogroup Icterohaemorrhagiae serovar Lai (strain 56601), this protein is Proline--tRNA ligase.